Here is a 475-residue protein sequence, read N- to C-terminus: Aspartyl/glutamyl-tRNA(Asn/Gln) amidotransferase subunit B (475 aa).

Belongs to the GatB/GatE family. GatB subfamily. Heterotrimer of A, B and C subunits.

It catalyses the reaction L-glutamyl-tRNA(Gln) + L-glutamine + ATP + H2O = L-glutaminyl-tRNA(Gln) + L-glutamate + ADP + phosphate + H(+). The catalysed reaction is L-aspartyl-tRNA(Asn) + L-glutamine + ATP + H2O = L-asparaginyl-tRNA(Asn) + L-glutamate + ADP + phosphate + 2 H(+). Allows the formation of correctly charged Asn-tRNA(Asn) or Gln-tRNA(Gln) through the transamidation of misacylated Asp-tRNA(Asn) or Glu-tRNA(Gln) in organisms which lack either or both of asparaginyl-tRNA or glutaminyl-tRNA synthetases. The reaction takes place in the presence of glutamine and ATP through an activated phospho-Asp-tRNA(Asn) or phospho-Glu-tRNA(Gln). This Pediococcus pentosaceus (strain ATCC 25745 / CCUG 21536 / LMG 10740 / 183-1w) protein is Aspartyl/glutamyl-tRNA(Asn/Gln) amidotransferase subunit B.